We begin with the raw amino-acid sequence, 474 residues long: Glutamate--tRNA ligase (474 aa).

The 'HIGH' region signature appears at Pro10–Gly20. Residues Cys107, Cys109, Cys134, and Asp136 each coordinate Zn(2+). Positions Arg244–Arg248 match the 'KMSKS' region motif. Lys247 is a binding site for ATP.

Belongs to the class-I aminoacyl-tRNA synthetase family. Glutamate--tRNA ligase type 1 subfamily. In terms of assembly, monomer. Requires Zn(2+) as cofactor.

It localises to the cytoplasm. It catalyses the reaction tRNA(Glu) + L-glutamate + ATP = L-glutamyl-tRNA(Glu) + AMP + diphosphate. Its function is as follows. Catalyzes the attachment of glutamate to tRNA(Glu) in a two-step reaction: glutamate is first activated by ATP to form Glu-AMP and then transferred to the acceptor end of tRNA(Glu). The chain is Glutamate--tRNA ligase from Anaeromyxobacter dehalogenans (strain 2CP-C).